A 476-amino-acid chain; its full sequence is Ubiquinone biosynthesis monooxygenase COQ6, mitochondrial (476 aa).

The N-terminal 35 residues, 1–35 (MAARIGSMAGLLCVRWWSSAQLAARGGPLVASQRW), are a transit peptide targeting the mitochondrion. At K219 the chain carries N6-succinyllysine.

Belongs to the UbiH/COQ6 family. Component of a multi-subunit COQ enzyme complex, composed of at least COQ3, COQ4, COQ5, COQ6, COQ7 and COQ9. Interacts with COQ8B and COQ7. FAD is required as a cofactor. As to expression, expressed in the kidney, in podocytes.

Its subcellular location is the mitochondrion inner membrane. The protein resides in the golgi apparatus. It is found in the cell projection. It catalyses the reaction 4-hydroxy-3-(all-trans-decaprenyl)benzoate + 2 reduced [2Fe-2S]-[ferredoxin] + O2 + 2 H(+) = 3,4-dihydroxy-5-(all-trans-decaprenyl)benzoate + 2 oxidized [2Fe-2S]-[ferredoxin] + H2O. The catalysed reaction is 2-methoxy-6-(all-trans-decaprenyl)phenol + 2 reduced [2Fe-2S]-[ferredoxin] + O2 + 2 H(+) = 2-methoxy-6-(all-trans-decaprenyl)benzene-1,4-diol + 2 oxidized [2Fe-2S]-[ferredoxin] + H2O. It functions in the pathway cofactor biosynthesis; ubiquinone biosynthesis. Functionally, FAD-dependent monooxygenase required for two non-consecutive steps during ubiquinone biosynthesis. Required for the C5-ring hydroxylation during ubiquinone biosynthesis by catalyzing the hydroxylation of 4-hydroxy-3-(all-trans-decaprenyl)benzoic acid to 3,4-dihydroxy-5-(all-trans-decaprenyl)benzoic acid. Also acts downstream of COQ4, for the C1-hydroxylation during ubiquinone biosynthesis by catalyzing the hydroxylation of 2-methoxy-6-(all-trans-decaprenyl)phenol to 2-methoxy-6-(all-trans-decaprenyl)benzene-1,4-diol. The electrons required for the hydroxylation reaction are funneled indirectly to COQ6 from NADPH via a ferredoxin/ferredoxin reductase system composed of FDX2 and FDXR. The chain is Ubiquinone biosynthesis monooxygenase COQ6, mitochondrial from Mus musculus (Mouse).